The primary structure comprises 1148 residues: Ice nucleation protein (1148 aa).

Disordered regions lie at residues 110 to 131 (ADPA…PTAI), 222 to 256 (YGST…GYGS), and 367 to 394 (GSTQ…GSNL). Residues 114–128 (STSTSTSTSTLTPMP) are compositionally biased toward low complexity. The octapeptide periodicity stretch occupies residues 180 to 1099 (ATYGSTLSGD…LSAGEDSTLI (920 aa)). A compositionally biased stretch (polar residues) spans 230–250 (EDSSLTAGYGSTQTAQEGSNL).

This sequence belongs to the bacterial ice nucleation protein family.

It is found in the cell outer membrane. Ice nucleation proteins enable bacteria to nucleate crystallization in supercooled water. The protein is Ice nucleation protein (inaK) of Pseudomonas syringae.